The following is a 622-amino-acid chain: Kinesin-like protein KIFC1 (622 aa).

Positions 1 to 88 are disordered; the sequence is MKEALEPAKK…KRPGKRPDWD (88 aa). Polar residues predominate over residues 32–41; sequence SSLSQPQGPT. A coiled-coil region spans residues 95–264; it reads DLTEELKCYR…QELKGNIRVF (170 aa). The Kinesin motor domain maps to 260–612; sequence NIRVFCRVRP…LRFASKVNQC (353 aa). The interval 279 to 323 is disordered; the sequence is PGFLLFPHGPAGPSDPPTRLSLSRSDDRRSTLTRAPAPTTRHDFS. Thr-309 is subject to Phosphothreonine. ATP is bound at residue 360–367; that stretch reads GQTGSGKT.

It belongs to the TRAFAC class myosin-kinesin ATPase superfamily. Kinesin family. NCD subfamily. Binds NUBP1 and NUBP2. Interacts with PPP1R42.

It is found in the nucleus. It localises to the cytoplasm. Its subcellular location is the cytoskeleton. The protein resides in the microtubule organizing center. The protein localises to the centrosome. It is found in the spindle. It localises to the early endosome. Minus end-directed microtubule-dependent motor required for bipolar spindle formation. May contribute to movement of early endocytic vesicles. Regulates cilium formation and structure. The protein is Kinesin-like protein KIFC1 of Cricetulus griseus (Chinese hamster).